Here is a 402-residue protein sequence, read N- to C-terminus: Choline dehydrogenase (402 aa).

The protein belongs to the iron-containing alcohol dehydrogenase family.

The catalysed reaction is choline + NAD(+) = betaine aldehyde + NADH + H(+). It functions in the pathway amine and polyamine biosynthesis; betaine biosynthesis via choline pathway; betaine aldehyde from choline (dehydrogenase route): step 1/1. Its function is as follows. Involved in the biosynthesis of the osmoprotectant glycine betaine from choline. The chain is Choline dehydrogenase from Bacillus subtilis (strain 168).